The primary structure comprises 332 residues: Tetraacyldisaccharide 4'-kinase (332 aa).

Position 55-62 (G55–T62) interacts with ATP.

The protein belongs to the LpxK family.

It catalyses the reaction a lipid A disaccharide + ATP = a lipid IVA + ADP + H(+). It participates in glycolipid biosynthesis; lipid IV(A) biosynthesis; lipid IV(A) from (3R)-3-hydroxytetradecanoyl-[acyl-carrier-protein] and UDP-N-acetyl-alpha-D-glucosamine: step 6/6. In terms of biological role, transfers the gamma-phosphate of ATP to the 4'-position of a tetraacyldisaccharide 1-phosphate intermediate (termed DS-1-P) to form tetraacyldisaccharide 1,4'-bis-phosphate (lipid IVA). This chain is Tetraacyldisaccharide 4'-kinase, found in Acidithiobacillus ferrooxidans (strain ATCC 53993 / BNL-5-31) (Leptospirillum ferrooxidans (ATCC 53993)).